A 771-amino-acid polypeptide reads, in one-letter code: Semaphorin-3A (771 aa).

The N-terminal stretch at 1-20 (MGWLTRIVCLFWGVLLTARA) is a signal peptide. Residues 31–514 (RLKLSYKEML…STAGVAQLPL (484 aa)) form the Sema domain. The N-linked (GlcNAc...) asparagine glycan is linked to Asn-53. Residues Cys-103 and Cys-114 are joined by a disulfide bond. Asn-125 is a glycosylation site (N-linked (GlcNAc...) asparagine). 4 cysteine pairs are disulfide-bonded: Cys-132–Cys-141, Cys-269–Cys-381, Cys-293–Cys-341, and Cys-517–Cys-535. Positions 580-664 (PEERIIYGVE…GFIQTLLKVT (85 aa)) constitute an Ig-like C2-type domain. A glycan (N-linked (GlcNAc...) asparagine) is linked at Asn-590. The cysteines at positions 649 and 722 are disulfide-linked. A compositionally biased stretch (basic residues) spans 728 to 737 (RDRKQRRQRP). Residues 728 to 771 (RDRKQRRQRPGHTPGNSNKWKHLQENKKGRNRRTHEFERAPRSV) form a disordered region. The segment covering 749 to 771 (HLQENKKGRNRRTHEFERAPRSV) has biased composition (basic and acidic residues).

Belongs to the semaphorin family. In terms of assembly, interacts with PLXND1. Expressed in the dorsal root ganglia.

It is found in the secreted. Its function is as follows. Involved in the development of the olfactory system and in neuronal control of puberty. Induces the collapse and paralysis of neuronal growth cones. Could serve as a ligand that guides specific growth cones by a motility-inhibiting mechanism. Binds to the complex neuropilin-1/plexin-1. In Homo sapiens (Human), this protein is Semaphorin-3A (SEMA3A).